Reading from the N-terminus, the 204-residue chain is Ribonuclease HII (204 aa).

The RNase H type-2 domain occupies 1 to 197; it reads MILGIDEAGR…KNRILNPKLL (197 aa). A divalent metal cation-binding residues include Asp-6, Glu-7, and Asp-103.

It belongs to the RNase HII family. Mn(2+) serves as cofactor. It depends on Mg(2+) as a cofactor.

Its subcellular location is the cytoplasm. The enzyme catalyses Endonucleolytic cleavage to 5'-phosphomonoester.. Functionally, endonuclease that specifically degrades the RNA of RNA-DNA hybrids. This is Ribonuclease HII from Helicobacter pylori (strain Shi470).